The chain runs to 478 residues: Cytochrome c-552 (478 aa).

An N-terminal signal peptide occupies residues 1–26 (MARKTLRARRFFSLIFPFFFITSVYA). Residue His94 coordinates heme c. Residues Cys122, Cys125, and Lys126 each coordinate heme. 6 residues coordinate heme c: Cys160, Cys163, His164, Cys209, Cys212, and His213. Residues Glu215, Tyr216, Lys261, and Gln263 each coordinate Ca(2+). Tyr216 is a binding site for substrate. His264 contacts substrate. Heme c is bound by residues His275, Cys282, Cys285, His286, His301, Cys314, Cys317, His318, and His393.

Belongs to the cytochrome c-552 family. Ca(2+) is required as a cofactor. It depends on heme c as a cofactor.

It is found in the periplasm. It catalyses the reaction 6 Fe(III)-[cytochrome c] + NH4(+) + 2 H2O = 6 Fe(II)-[cytochrome c] + nitrite + 8 H(+). It participates in nitrogen metabolism; nitrate reduction (assimilation). Functionally, catalyzes the reduction of nitrite to ammonia, consuming six electrons in the process. In Salmonella paratyphi A (strain ATCC 9150 / SARB42), this protein is Cytochrome c-552.